The primary structure comprises 304 residues: Iron(III) enterobactin esterase (304 aa).

The N-terminal stretch at 1 to 25 (MRTSLLVAALGLALAAALPGGAPLA) is a signal peptide. Active-site charge relay system residues include Ser-182, Glu-242, and His-283.

Belongs to the esterase D family. Monomer.

It is found in the periplasm. It catalyses the reaction Fe(III)-enterobactin + 3 H2O + H(+) = Fe(III)-[N-(2,3-dihydroxybenzoyl)-L-serine] + 2 N-(2,3-dihydroxybenzoyl)-L-serine. It carries out the reaction Fe(III)-enterobactin + H2O = Fe(III)-[N-(2,3-dihydroxybenzoyl)-L-serine]3 + H(+). The enzyme catalyses Fe(III)-[N-(2,3-dihydroxybenzoyl)-L-serine]3 + H2O + H(+) = Fe(III)-[N-(2,3-dihydroxybenzoyl)-L-serine]2 + N-(2,3-dihydroxybenzoyl)-L-serine. The catalysed reaction is Fe(III)-[N-(2,3-dihydroxybenzoyl)-L-serine]2 + H2O + H(+) = Fe(III)-[N-(2,3-dihydroxybenzoyl)-L-serine] + N-(2,3-dihydroxybenzoyl)-L-serine. In terms of biological role, catalyzes the hydrolysis of ferric enterobactin (Fe-Ent). Hydrolyzes Fe-Ent into three molecules of 2,3-dihydroxybenzoylserine (DHBS) still complexed with ferric iron. Iron reduction is necessary to obtain complete release of the metal from DHBS. It can hydrolyze salmochelin S4 (diglucosyl-C-Ent) but is not involved in iron acquisition by this siderophore. This is Iron(III) enterobactin esterase from Pseudomonas aeruginosa (strain ATCC 15692 / DSM 22644 / CIP 104116 / JCM 14847 / LMG 12228 / 1C / PRS 101 / PAO1).